Here is a 43-residue protein sequence, read N- to C-terminus: Protein PsbN 2 (43 aa).

A helical transmembrane segment spans residues 4 to 24 (ATILGISIAAALVGITVLALY).

Belongs to the PsbN family.

It is found in the cellular thylakoid membrane. May play a role in photosystem I and II biogenesis. This chain is Protein PsbN 2, found in Microcystis aeruginosa (strain NIES-843 / IAM M-2473).